A 139-amino-acid chain; its full sequence is Putative nickel-responsive regulator (139 aa).

Ni(2+) is bound by residues His79, His90, His92, and Cys98.

This sequence belongs to the transcriptional regulatory CopG/NikR family. The cofactor is Ni(2+).

Transcriptional regulator. In Solibacter usitatus (strain Ellin6076), this protein is Putative nickel-responsive regulator.